The chain runs to 63 residues: DNA-directed RNA polymerase subunit omega (63 aa).

It belongs to the RNA polymerase subunit omega family. As to quaternary structure, the RNAP catalytic core consists of 2 alpha, 1 beta, 1 beta' and 1 omega subunit. When a sigma factor is associated with the core the holoenzyme is formed, which can initiate transcription.

It carries out the reaction RNA(n) + a ribonucleoside 5'-triphosphate = RNA(n+1) + diphosphate. Its function is as follows. Promotes RNA polymerase assembly. Latches the N- and C-terminal regions of the beta' subunit thereby facilitating its interaction with the beta and alpha subunits. The chain is DNA-directed RNA polymerase subunit omega from Blochmanniella pennsylvanica (strain BPEN).